The primary structure comprises 155 residues: SsrA-binding protein (155 aa).

Belongs to the SmpB family.

It localises to the cytoplasm. In terms of biological role, required for rescue of stalled ribosomes mediated by trans-translation. Binds to transfer-messenger RNA (tmRNA), required for stable association of tmRNA with ribosomes. tmRNA and SmpB together mimic tRNA shape, replacing the anticodon stem-loop with SmpB. tmRNA is encoded by the ssrA gene; the 2 termini fold to resemble tRNA(Ala) and it encodes a 'tag peptide', a short internal open reading frame. During trans-translation Ala-aminoacylated tmRNA acts like a tRNA, entering the A-site of stalled ribosomes, displacing the stalled mRNA. The ribosome then switches to translate the ORF on the tmRNA; the nascent peptide is terminated with the 'tag peptide' encoded by the tmRNA and targeted for degradation. The ribosome is freed to recommence translation, which seems to be the essential function of trans-translation. The protein is SsrA-binding protein of Streptococcus agalactiae serotype Ia (strain ATCC 27591 / A909 / CDC SS700).